The chain runs to 187 residues: MSNVSFLELQYKLSKNKMLRKPSRMFSRDRQSSGLSSPGPGGFSQPSVNEMRRVFSRFDLDKDGKISQTEYKVVLRALGQERAIEDVPKIFKAVDLDGDGFIDFREFIDAYKRSGGIRSSDIRNSFWTFDLNGDGKISAEEVMSVLWKLGERCSLEDCNRMVRAVDADGDGLVNMEEFIKMMSSNNV.

The segment at 21–47 is disordered; sequence KPSRMFSRDRQSSGLSSPGPGGFSQPS. Residues 32 to 47 are compositionally biased toward low complexity; that stretch reads SSGLSSPGPGGFSQPS. EF-hand domains follow at residues 46–81, 82–117, 129–152, and 153–187; these read PSVNEMRRVFSRFDLDKDGKISQTEYKVVLRALGQE, RAIEDVPKIFKAVDLDGDGFIDFREFIDAYKRSGGI, FDLNGDGKISAEEVMSVLWKLGER, and CSLEDCNRMVRAVDADGDGLVNMEEFIKMMSSNNV. Ca(2+) contacts are provided by Asp-59, Asp-61, Asp-63, Lys-65, Glu-70, Asp-95, Asp-97, Asp-99, Glu-106, Asp-130, Asn-132, Asp-134, Lys-136, Glu-141, Asp-166, Asp-168, Asp-170, and Glu-177.

It belongs to the calmodulin family.

Functionally, potential calcium sensor. This Arabidopsis thaliana (Mouse-ear cress) protein is Calmodulin-like protein 30.